The following is a 349-amino-acid chain: MDTIAARALTVMRACATLQEARIVLEANVMEILGIAINRYNGLTLRGVTMRPTSLAQRNEMFFMCLDMMLSAAGINVGPISPDYTQHMATIGVLATPEIPFTTEAANEIARVTGETSTWGPARQPYGFFLETEETYQPGRWFMRAAQAVTAVVCGPDMIQVSLNAGARGDVQQIFQGRNDPMMIYLVWRRIENFAMAQGNSQQTLAGVTVSVGGVDMRAGRIIAWDGQAALQIHNPTQQNAMVQIQVVFYISMDKTLNQYPALTAEIFNVYSFRDHTWHGLRTAILNRTTLPNMLPPIFPPNDRDSILTLLLLSTLADVYTVLRPEFAIHGVNPMSGPLTRATARAAYV.

The N-linked (GlcNAc...) asparagine; by host glycan is linked to N287.

Belongs to the orbivirus VP7 family. In terms of assembly, homotrimer that assemble in a complex of 260 capsomers on an inner scaffold composed of VP3.

The protein resides in the virion. Its function is as follows. The VP7 protein is one of the five proteins (with VP1, VP3, VP4, and VP6) which form the inner capsid of the virus. This chain is Core protein VP7 (Segment-7), found in Bluetongue virus 1 (isolate Australia) (BTV 1).